Consider the following 661-residue polypeptide: UvrABC system protein B (661 aa).

The Helicase ATP-binding domain occupies 31-186 (DNIEGGEKAQ…LLNALVDIQF (156 aa)). 44-51 (GATGTGKT) contacts ATP. The Beta-hairpin motif lies at 97–120 (YYDYYQPEAYVPSSDTYIEKDSSV). The 167-residue stretch at 435–601 (QMDDLLGEIN…TIKKEIRDLI (167 aa)) folds into the Helicase C-terminal domain. The 36-residue stretch at 626–661 (KAMIKKLEGQMQEAAEVLDFELAAQIRDMVIELKNM) folds into the UVR domain.

Belongs to the UvrB family. Forms a heterotetramer with UvrA during the search for lesions. Interacts with UvrC in an incision complex.

The protein localises to the cytoplasm. The UvrABC repair system catalyzes the recognition and processing of DNA lesions. A damage recognition complex composed of 2 UvrA and 2 UvrB subunits scans DNA for abnormalities. Upon binding of the UvrA(2)B(2) complex to a putative damaged site, the DNA wraps around one UvrB monomer. DNA wrap is dependent on ATP binding by UvrB and probably causes local melting of the DNA helix, facilitating insertion of UvrB beta-hairpin between the DNA strands. Then UvrB probes one DNA strand for the presence of a lesion. If a lesion is found the UvrA subunits dissociate and the UvrB-DNA preincision complex is formed. This complex is subsequently bound by UvrC and the second UvrB is released. If no lesion is found, the DNA wraps around the other UvrB subunit that will check the other stand for damage. This Streptococcus suis (strain 98HAH33) protein is UvrABC system protein B.